The sequence spans 202 residues: ATP-dependent Clp protease proteolytic subunit (202 aa).

Serine 106 functions as the Nucleophile in the catalytic mechanism. The active site involves histidine 131.

Belongs to the peptidase S14 family. In terms of assembly, fourteen ClpP subunits assemble into 2 heptameric rings which stack back to back to give a disk-like structure with a central cavity, resembling the structure of eukaryotic proteasomes.

It localises to the cytoplasm. The enzyme catalyses Hydrolysis of proteins to small peptides in the presence of ATP and magnesium. alpha-casein is the usual test substrate. In the absence of ATP, only oligopeptides shorter than five residues are hydrolyzed (such as succinyl-Leu-Tyr-|-NHMec, and Leu-Tyr-Leu-|-Tyr-Trp, in which cleavage of the -Tyr-|-Leu- and -Tyr-|-Trp bonds also occurs).. In terms of biological role, cleaves peptides in various proteins in a process that requires ATP hydrolysis. Has a chymotrypsin-like activity. Plays a major role in the degradation of misfolded proteins. The protein is ATP-dependent Clp protease proteolytic subunit of Paracidovorax citrulli (strain AAC00-1) (Acidovorax citrulli).